The chain runs to 100 residues: Urease subunit gamma (100 aa).

Belongs to the urease gamma subunit family. In terms of assembly, heterotrimer of UreA (gamma), UreB (beta) and UreC (alpha) subunits. Three heterotrimers associate to form the active enzyme.

Its subcellular location is the cytoplasm. The enzyme catalyses urea + 2 H2O + H(+) = hydrogencarbonate + 2 NH4(+). It functions in the pathway nitrogen metabolism; urea degradation; CO(2) and NH(3) from urea (urease route): step 1/1. This is Urease subunit gamma from Synechococcus sp. (strain RCC307).